The sequence spans 732 residues: Phosphoribosylformylglycinamidine synthase subunit PurL (732 aa).

His32 is a catalytic residue. Position 35 (Tyr35) interacts with ATP. Glu81 is a binding site for Mg(2+). Residues 82 to 85 (SHNH) and Arg104 contribute to the substrate site. The active-site Proton acceptor is His83. Asp105 is a binding site for Mg(2+). Gln230 contributes to the substrate binding site. Mg(2+) is bound at residue Asp258. 302 to 304 (ESQ) contributes to the substrate binding site. ATP contacts are provided by Asp485 and Gly522. Mg(2+) is bound at residue Asn523. Ser525 is a substrate binding site.

Belongs to the FGAMS family. Monomer. Part of the FGAM synthase complex composed of 1 PurL, 1 PurQ and 2 PurS subunits.

It is found in the cytoplasm. It carries out the reaction N(2)-formyl-N(1)-(5-phospho-beta-D-ribosyl)glycinamide + L-glutamine + ATP + H2O = 2-formamido-N(1)-(5-O-phospho-beta-D-ribosyl)acetamidine + L-glutamate + ADP + phosphate + H(+). It participates in purine metabolism; IMP biosynthesis via de novo pathway; 5-amino-1-(5-phospho-D-ribosyl)imidazole from N(2)-formyl-N(1)-(5-phospho-D-ribosyl)glycinamide: step 1/2. Part of the phosphoribosylformylglycinamidine synthase complex involved in the purines biosynthetic pathway. Catalyzes the ATP-dependent conversion of formylglycinamide ribonucleotide (FGAR) and glutamine to yield formylglycinamidine ribonucleotide (FGAM) and glutamate. The FGAM synthase complex is composed of three subunits. PurQ produces an ammonia molecule by converting glutamine to glutamate. PurL transfers the ammonia molecule to FGAR to form FGAM in an ATP-dependent manner. PurS interacts with PurQ and PurL and is thought to assist in the transfer of the ammonia molecule from PurQ to PurL. The protein is Phosphoribosylformylglycinamidine synthase subunit PurL of Methanococcus aeolicus (strain ATCC BAA-1280 / DSM 17508 / OCM 812 / Nankai-3).